The primary structure comprises 202 residues: Outer-membrane lipoprotein carrier protein (202 aa).

The signal sequence occupies residues 1-18 (MNKLFLILLLIFSHEVFS).

The protein belongs to the LolA family. In terms of assembly, monomer.

The protein localises to the periplasm. Participates in the translocation of lipoproteins from the inner membrane to the outer membrane. Only forms a complex with a lipoprotein if the residue after the N-terminal Cys is not an aspartate (The Asp acts as a targeting signal to indicate that the lipoprotein should stay in the inner membrane). This is Outer-membrane lipoprotein carrier protein from Legionella pneumophila (strain Paris).